The primary structure comprises 433 residues: MEYKVEDVSPVKKKVNVTVPVEEVDAALGAAIAMYRTSVNLDGFRKGKVPASIVENRFRKEIYAEATQDLVNVHINEIVTSLEVSPLSRIDFDGGELERGKEFSYTISFEVMPQFDLPDYEGFAVEQEKAVVDEKEVDEVIARIRRNMAELVPVAETRPGADGDVVVLDFAAFENGEPIEGVSAENFQLSLGEKQSLEDFENLVKTIPAGQEAEGPITFPDDFLNPDFAGKTVTMKVKVHAVKERRLPEIDDALAQKAGGFESMEKMRETVVTSYMQSREQLHKATAQKSMLDKLLKMVDFALPESMVDMYVGNLIEDMRVKMERQGRGLESLGKTPEQLREQVLPEAQQIARSQIFLLAAGRKEAVEVSEQEVDGQLQQLAMRSGQDFDTLKDYYVRNGLIFNLRDRLIADKAMDAIYAKANVTMVDPAPAA.

The region spanning 163–248 (GDVVVLDFAA…VHAVKERRLP (86 aa)) is the PPIase FKBP-type domain.

This sequence belongs to the FKBP-type PPIase family. Tig subfamily.

It localises to the cytoplasm. It catalyses the reaction [protein]-peptidylproline (omega=180) = [protein]-peptidylproline (omega=0). Functionally, involved in protein export. Acts as a chaperone by maintaining the newly synthesized protein in an open conformation. Functions as a peptidyl-prolyl cis-trans isomerase. The protein is Trigger factor of Nitratidesulfovibrio vulgaris (strain DP4) (Desulfovibrio vulgaris).